The chain runs to 419 residues: Mitogen-activated protein kinase spm1 (419 aa).

One can recognise a Protein kinase domain in the interval 23–314; the sequence is YTVTKELGQG…VEEALEHPYL (292 aa). ATP contacts are provided by residues 29-37 and Lys52; that span reads LGQGAYGIV. The active-site Proton acceptor is Asp149.

It belongs to the protein kinase superfamily. Ser/Thr protein kinase family. MAP kinase subfamily. Requires Mg(2+) as cofactor. Phosphorylated by the MAP kinase kinase mkk1.

The enzyme catalyses L-seryl-[protein] + ATP = O-phospho-L-seryl-[protein] + ADP + H(+). It carries out the reaction L-threonyl-[protein] + ATP = O-phospho-L-threonyl-[protein] + ADP + H(+). Functionally, mitogen-activated protein kinase, part of the mkh1-mkk1-spm1 MAPK cascade that regulates vegetative growth, conidial formation, colony surface hydrophobicity, osmotic stress, cell wall integrity maintenance, carbon and nitrogen source utilization, chitin distribution, septa formation, and pathogenicity. The polypeptide is Mitogen-activated protein kinase spm1 (Cytospora mali (Apple Valsa canker fungus)).